We begin with the raw amino-acid sequence, 313 residues long: Dehydrodolichyl diphosphate synthase CPT5, chloroplastic (313 aa).

Residues M1–A42 constitute a chloroplast transit peptide. D89 is a catalytic residue.

The protein belongs to the UPP synthase family. Mg(2+) serves as cofactor. As to expression, expressed in leaf trichomes, stem trichomes and old leaves. Expressed at low levels in young leaves and flowers.

It is found in the plastid. It localises to the chloroplast. The catalysed reaction is n isopentenyl diphosphate + (2E,6E)-farnesyl diphosphate = a di-trans,poly-cis-polyprenyl diphosphate + n diphosphate. Its function is as follows. Catalyzes cis-prenyl chain elongation to produce the polyprenyl backbone of dolichol, a glycosyl carrier-lipid required for the biosynthesis of several classes of glycoprotein. This chain is Dehydrodolichyl diphosphate synthase CPT5, chloroplastic, found in Solanum lycopersicum (Tomato).